Here is a 398-residue protein sequence, read N- to C-terminus: G2/mitotic-specific cyclin-B2 (398 aa).

Thr8 is subject to Phosphothreonine. Ser11, Ser77, and Ser92 each carry phosphoserine. Residue Thr94 is modified to Phosphothreonine. Phosphoserine occurs at positions 99, 392, and 398.

This sequence belongs to the cyclin family. Cyclin AB subfamily. In terms of assembly, interacts with the CDK1 protein kinase to form a serine/threonine kinase holoenzyme complex also known as maturation promoting factor (MPF). The cyclin subunit imparts substrate specificity to the complex.

Functionally, essential for the control of the cell cycle at the G2/M (mitosis) transition. The protein is G2/mitotic-specific cyclin-B2 (CCNB2) of Macaca fascicularis (Crab-eating macaque).